We begin with the raw amino-acid sequence, 202 residues long: Protein G1-like4 (202 aa).

2 disordered regions span residues 1 to 44 (MDLS…RYEA) and 158 to 202 (RARG…GAAC). Gly residues predominate over residues 12-22 (SGGGNGGGGGS). Residues 23–36 (SSSNSSPSMGAGAP) are compositionally biased toward low complexity. The ALOG domain occupies 41 to 168 (RYEAQKRRDW…ARGVSYEKKK (128 aa)). Residues 166 to 170 (KKKRK) carry the Nuclear localization signal motif. Low complexity predominate over residues 173-186 (QQQQLQGGDSSGLH). Residues 192-202 (PPPPPPAGAAC) show a composition bias toward pro residues.

Belongs to the plant homeotic and developmental regulators ALOG protein family.

It is found in the nucleus. Its function is as follows. Probable transcription regulator that acts as a developmental regulator by promoting cell growth in response to light. This Oryza sativa subsp. indica (Rice) protein is Protein G1-like4.